Reading from the N-terminus, the 459-residue chain is Ribulose bisphosphate carboxylase (459 aa).

Residue asparagine 111 coordinates substrate. The active-site Proton acceptor is lysine 166. Lysine 168 is a binding site for substrate. Mg(2+) is bound by residues lysine 191, aspartate 193, and glutamate 194. At lysine 191 the chain carries N6-carboxylysine. Histidine 287 functions as the Proton acceptor in the catalytic mechanism. Substrate is bound by residues arginine 288, histidine 321, and serine 368.

Belongs to the RuBisCO large chain family. Type II subfamily. In terms of assembly, homodimer. The cofactor is Mg(2+).

It carries out the reaction 2 (2R)-3-phosphoglycerate + 2 H(+) = D-ribulose 1,5-bisphosphate + CO2 + H2O. The enzyme catalyses D-ribulose 1,5-bisphosphate + O2 = 2-phosphoglycolate + (2R)-3-phosphoglycerate + 2 H(+). RuBisCO catalyzes two reactions: the carboxylation of D-ribulose 1,5-bisphosphate, the primary event in carbon dioxide fixation, as well as the oxidative fragmentation of the pentose substrate. Both reactions occur simultaneously and in competition at the same active site. The chain is Ribulose bisphosphate carboxylase from Paramagnetospirillum magnetotacticum (Aquaspirillum magnetotacticum).